Consider the following 313-residue polypeptide: 4-hydroxy-3-methylbut-2-enyl diphosphate reductase (313 aa).

C12 lines the [4Fe-4S] cluster pocket. The (2E)-4-hydroxy-3-methylbut-2-enyl diphosphate site is built by H41 and H74. 2 residues coordinate dimethylallyl diphosphate: H41 and H74. Isopentenyl diphosphate contacts are provided by H41 and H74. Position 96 (C96) interacts with [4Fe-4S] cluster. H124 lines the (2E)-4-hydroxy-3-methylbut-2-enyl diphosphate pocket. H124 is a dimethylallyl diphosphate binding site. H124 lines the isopentenyl diphosphate pocket. The active-site Proton donor is the E126. T167 is a binding site for (2E)-4-hydroxy-3-methylbut-2-enyl diphosphate. [4Fe-4S] cluster is bound at residue C197. (2E)-4-hydroxy-3-methylbut-2-enyl diphosphate contacts are provided by S225, S226, N227, and S269. Dimethylallyl diphosphate-binding residues include S225, S226, N227, and S269. Isopentenyl diphosphate is bound by residues S225, S226, N227, and S269.

It belongs to the IspH family. Requires [4Fe-4S] cluster as cofactor.

The enzyme catalyses isopentenyl diphosphate + 2 oxidized [2Fe-2S]-[ferredoxin] + H2O = (2E)-4-hydroxy-3-methylbut-2-enyl diphosphate + 2 reduced [2Fe-2S]-[ferredoxin] + 2 H(+). The catalysed reaction is dimethylallyl diphosphate + 2 oxidized [2Fe-2S]-[ferredoxin] + H2O = (2E)-4-hydroxy-3-methylbut-2-enyl diphosphate + 2 reduced [2Fe-2S]-[ferredoxin] + 2 H(+). It participates in isoprenoid biosynthesis; dimethylallyl diphosphate biosynthesis; dimethylallyl diphosphate from (2E)-4-hydroxy-3-methylbutenyl diphosphate: step 1/1. Its pathway is isoprenoid biosynthesis; isopentenyl diphosphate biosynthesis via DXP pathway; isopentenyl diphosphate from 1-deoxy-D-xylulose 5-phosphate: step 6/6. In terms of biological role, catalyzes the conversion of 1-hydroxy-2-methyl-2-(E)-butenyl 4-diphosphate (HMBPP) into a mixture of isopentenyl diphosphate (IPP) and dimethylallyl diphosphate (DMAPP). Acts in the terminal step of the DOXP/MEP pathway for isoprenoid precursor biosynthesis. In Methylococcus capsulatus (strain ATCC 33009 / NCIMB 11132 / Bath), this protein is 4-hydroxy-3-methylbut-2-enyl diphosphate reductase.